The chain runs to 1026 residues: RecBCD enzyme subunit RecB (1026 aa).

Positions 1–438 (MSSFDIFSPT…LILDTNYRST (438 aa)) constitute a UvrD-like helicase ATP-binding domain. Residues 1–766 (MSSFDIFSPT…LANYANVTKH (766 aa)) form a DNA-binding and helicase activity, interacts with RecC region. Residue 21 to 28 (ASAGTGKT) participates in ATP binding. Positions 815–1026 (SRTIHSFSST…KGNGFLQPGR (212 aa)) are nuclease activity, interacts with RecD and RecA. Positions 854, 940, and 953 each coordinate Mg(2+). D953 (for nuclease activity) is an active-site residue.

This sequence belongs to the helicase family. UvrD subfamily. Heterotrimer of RecB, RecC and RecD. All subunits contribute to DNA-binding. Interacts with RecA. Mg(2+) serves as cofactor.

It carries out the reaction Exonucleolytic cleavage (in the presence of ATP) in either 5'- to 3'- or 3'- to 5'-direction to yield 5'-phosphooligonucleotides.. The enzyme catalyses Couples ATP hydrolysis with the unwinding of duplex DNA by translocating in the 3'-5' direction.. The catalysed reaction is ATP + H2O = ADP + phosphate + H(+). Its function is as follows. A helicase/nuclease that prepares dsDNA breaks (DSB) for recombinational DNA repair. Binds to DSBs and unwinds DNA via a highly rapid and processive ATP-dependent bidirectional helicase activity. Unwinds dsDNA until it encounters a Chi (crossover hotspot instigator) sequence from the 3' direction. Cuts ssDNA a few nucleotides 3' to the Chi site. The properties and activities of the enzyme are changed at Chi. The Chi-altered holoenzyme produces a long 3'-ssDNA overhang and facilitates RecA-binding to the ssDNA for homologous DNA recombination and repair. Holoenzyme degrades any linearized DNA that is unable to undergo homologous recombination. In the holoenzyme this subunit contributes ATPase, 3'-5' helicase, exonuclease activity and loads RecA onto ssDNA. The chain is RecBCD enzyme subunit RecB from Chlamydia trachomatis serovar D (strain ATCC VR-885 / DSM 19411 / UW-3/Cx).